The following is a 475-amino-acid chain: Ribulose bisphosphate carboxylase large chain (475 aa).

Residues 1–2 (MS) constitute a propeptide that is removed on maturation. An N-acetylproline modification is found at P3. K14 is subject to N6,N6,N6-trimethyllysine. The substrate site is built by N123 and T173. Catalysis depends on K175, which acts as the Proton acceptor. K177 is a binding site for substrate. Mg(2+) contacts are provided by K201, D203, and E204. K201 carries the N6-carboxylysine modification. H294 (proton acceptor) is an active-site residue. 3 residues coordinate substrate: R295, H327, and S379.

Belongs to the RuBisCO large chain family. Type I subfamily. As to quaternary structure, heterohexadecamer of 8 large chains and 8 small chains; disulfide-linked. The disulfide link is formed within the large subunit homodimers. Mg(2+) is required as a cofactor. Post-translationally, the disulfide bond which can form in the large chain dimeric partners within the hexadecamer appears to be associated with oxidative stress and protein turnover.

It localises to the plastid. The protein resides in the chloroplast. The enzyme catalyses 2 (2R)-3-phosphoglycerate + 2 H(+) = D-ribulose 1,5-bisphosphate + CO2 + H2O. It carries out the reaction D-ribulose 1,5-bisphosphate + O2 = 2-phosphoglycolate + (2R)-3-phosphoglycerate + 2 H(+). RuBisCO catalyzes two reactions: the carboxylation of D-ribulose 1,5-bisphosphate, the primary event in carbon dioxide fixation, as well as the oxidative fragmentation of the pentose substrate in the photorespiration process. Both reactions occur simultaneously and in competition at the same active site. In Ostrya virginiana (American hophornbeam), this protein is Ribulose bisphosphate carboxylase large chain.